The sequence spans 389 residues: GTPase Obg (389 aa).

The region spanning 1-159 is the Obg domain; that stretch reads MKFVDEAKIL…REVLLELMLL (159 aa). Residues 160 to 333 enclose the OBG-type G domain; the sequence is ADVGMLGMPN…LCWDIMEFLK (174 aa). Residues 166–173, 191–195, 213–216, 283–286, and 314–316 each bind GTP; these read GMPNAGKS, FTTLV, DIPG, NKVD, and AAI. The Mg(2+) site is built by Ser173 and Thr193. Residues 362 to 389 are disordered; sequence QLENPDLEDDDEDWDEEDDDGVEFIYQR. A compositionally biased stretch (acidic residues) spans 364-383; that stretch reads ENPDLEDDDEDWDEEDDDGV.

The protein belongs to the TRAFAC class OBG-HflX-like GTPase superfamily. OBG GTPase family. As to quaternary structure, monomer. Mg(2+) serves as cofactor.

The protein resides in the cytoplasm. An essential GTPase which binds GTP, GDP and possibly (p)ppGpp with moderate affinity, with high nucleotide exchange rates and a fairly low GTP hydrolysis rate. Plays a role in control of the cell cycle, stress response, ribosome biogenesis and in those bacteria that undergo differentiation, in morphogenesis control. This Proteus mirabilis (strain HI4320) protein is GTPase Obg.